A 629-amino-acid polypeptide reads, in one-letter code: Mitochondrial Rho GTPase 1 (629 aa).

The Cytoplasmic portion of the chain corresponds to 1-600; sequence MSTAVRICVC…PRSEEPPADR (600 aa). Residues 2 to 170 enclose the Miro 1 domain; the sequence is STAVRICVCG…FYLCQKAVTH (169 aa). GTP is bound by residues 11–18, 59–63, and 115–118; these read GDEGTGKS, DTSAR, and NKSD. 2 consecutive EF-hand domains span residues 186–221 and 306–341; these read ACVD…SFDK and AGYR…TPGL. Residues Asp199, Asp201, Asp203, Tyr205, Glu210, Asp319, Asp321, Asp323, and Glu330 each coordinate Ca(2+). The Miro 2 domain maps to 421–585; it reads RNVVLCYILG…FVALAEAATN (165 aa). Residues 430–437, 466–470, and 535–538 each bind GTP; these read GSSGAGKS, ELQGG, and LKAD. The chain crosses the membrane as a helical; Anchor for type IV membrane protein span at residues 601-621; the sequence is ASLYMALGATACAALAAFMIW. The Mitochondrial intermembrane portion of the chain corresponds to 622-629; it reads RRSTSNAA.

This sequence belongs to the mitochondrial Rho GTPase family.

The protein localises to the mitochondrion outer membrane. Functionally, mitochondrial GTPase involved in mitochondrial trafficking. Probably involved in control of anterograde transport of mitochondria and their subcellular distribution. In Neurospora crassa (strain ATCC 24698 / 74-OR23-1A / CBS 708.71 / DSM 1257 / FGSC 987), this protein is Mitochondrial Rho GTPase 1 (gem-1).